The following is a 722-amino-acid chain: Probable C-mannosyltransferase DPY19L4 (722 aa).

A disordered region spans residues 1-34; it reads MAKEEGTSVEPRQRKKQRTSGSQEAKAEKIRRTP. A2 carries the post-translational modification N-acetylalanine. The segment covering 25–34 has biased composition (basic and acidic residues); that stretch reads AKAEKIRRTP. Helical transmembrane passes span 51–71, 160–177, 183–201, 246–262, 268–284, 291–307, 313–331, 351–369, 420–440, 465–485, 487–507, and 521–541; these read IVIG…YLSA, VYFY…YVTA, WLMS…WFLI, FCYL…MMVW, VLFL…IFSV, YEVY…GYLL, ALLV…LVKC, FYLL…KMFV, LLPF…QVFF, IIYH…MEGL, FIWT…PELW, and PMLL…LSLW.

It belongs to the dpy-19 family.

It is found in the membrane. Its function is as follows. Probable C-mannosyltransferase that mediates C-mannosylation of tryptophan residues on target proteins. This chain is Probable C-mannosyltransferase DPY19L4 (Dpy19l4), found in Mus musculus (Mouse).